We begin with the raw amino-acid sequence, 186 residues long: Peptidyl-tRNA hydrolase (186 aa).

Residue Tyr-14 coordinates tRNA. Residue His-19 is the Proton acceptor of the active site. TRNA contacts are provided by Tyr-64, Asn-66, and Asn-112.

The protein belongs to the PTH family. As to quaternary structure, monomer.

The protein localises to the cytoplasm. It catalyses the reaction an N-acyl-L-alpha-aminoacyl-tRNA + H2O = an N-acyl-L-amino acid + a tRNA + H(+). Its function is as follows. Hydrolyzes ribosome-free peptidyl-tRNAs (with 1 or more amino acids incorporated), which drop off the ribosome during protein synthesis, or as a result of ribosome stalling. Functionally, catalyzes the release of premature peptidyl moieties from peptidyl-tRNA molecules trapped in stalled 50S ribosomal subunits, and thus maintains levels of free tRNAs and 50S ribosomes. In Mesoplasma florum (strain ATCC 33453 / NBRC 100688 / NCTC 11704 / L1) (Acholeplasma florum), this protein is Peptidyl-tRNA hydrolase.